Here is a 322-residue protein sequence, read N- to C-terminus: MTGKLVERVHAINWNRLLDAKDLQVWERLTGNFWLPEKIPLSNDLASWQTLSSTEQQTTIRVFTGLTLLDTAQATVGAVAMIDDAVTPHEEAVLTNMAFMESVHAKSYSSIFSTLCSTKQIDDAFDWSEQNPYLQRKAQIIVDYYRGDDALKRKASSVMLESFLFYSGFYLPMYWSSRGKLTNTADLIRLIIRDEAVHGYYIGYKCQRGLADLTDAERADHREYTCELLHTLYANEIDYAHDLYDELGWTDDVLPYMRYNANKALANLGYQPAFDRDTCQVNPAVRAALDPGAGENHDFFSGSGSSYVMGTHQPTTDTDWDF.

3 residues coordinate Fe cation: D70, E101, and H104. Y108 is an active-site residue. The Fe cation site is built by E161, E195, and H198.

This sequence belongs to the ribonucleoside diphosphate reductase small chain family. Tetramer of two alpha and two beta subunits. It depends on Fe cation as a cofactor.

It catalyses the reaction a 2'-deoxyribonucleoside 5'-diphosphate + [thioredoxin]-disulfide + H2O = a ribonucleoside 5'-diphosphate + [thioredoxin]-dithiol. Provides the precursors necessary for DNA synthesis. Catalyzes the biosynthesis of deoxyribonucleotides from the corresponding ribonucleotides. The protein is Ribonucleoside-diphosphate reductase subunit beta nrdF1 (nrdF1) of Mycobacterium tuberculosis (strain CDC 1551 / Oshkosh).